The following is a 346-amino-acid chain: Structure-specific endonuclease subunit SLX1 (346 aa).

Positions 22–105 (DFYGVYLLRS…QHPYQTRHIK (84 aa)) constitute a GIY-YIG domain. The SLX1-type zinc finger occupies 216–306 (CFICNETIDY…TPLQGKCLSC (91 aa)).

The protein belongs to the SLX1 family. In terms of assembly, forms a heterodimer with SLX4. Requires a divalent metal cation as cofactor.

It localises to the nucleus. Functionally, catalytic subunit of the SLX1-SLX4 structure-specific endonuclease that resolves DNA secondary structures generated during DNA repair and recombination. Has endonuclease activity towards branched DNA substrates, introducing single-strand cuts in duplex DNA close to junctions with ss-DNA. This is Structure-specific endonuclease subunit SLX1 from Debaryomyces hansenii (strain ATCC 36239 / CBS 767 / BCRC 21394 / JCM 1990 / NBRC 0083 / IGC 2968) (Yeast).